The following is a 609-amino-acid chain: Phosphoprotein 85 (609 aa).

Residues 461 to 609 (QNEGRASSRA…RSTETNDERL (149 aa)) are disordered. Residues 465 to 478 (RASSRASSSHSTST) are compositionally biased toward low complexity. The segment covering 484-495 (PQSGRSTPTSIL) has biased composition (polar residues). 2 stretches are compositionally biased toward low complexity: residues 503-513 (SNSRSSSVSFS) and 552-563 (SPQSASSNNSMS). The segment covering 600–609 (RSTETNDERL) has biased composition (basic and acidic residues).

Belongs to the herpesviridae pp85 family. Phosphorylated.

The protein resides in the virion tegument. It is found in the host cytoplasm. The chain is Phosphoprotein 85 (U14) from Homo sapiens (Human).